The chain runs to 96 residues: Co-chaperonin GroES 2 (96 aa).

Belongs to the GroES chaperonin family. Heptamer of 7 subunits arranged in a ring. Interacts with the chaperonin GroEL.

The protein localises to the cytoplasm. Functionally, together with the chaperonin GroEL, plays an essential role in assisting protein folding. The GroEL-GroES system forms a nano-cage that allows encapsulation of the non-native substrate proteins and provides a physical environment optimized to promote and accelerate protein folding. GroES binds to the apical surface of the GroEL ring, thereby capping the opening of the GroEL channel. This is Co-chaperonin GroES 2 from Vibrio vulnificus (strain CMCP6).